Consider the following 306-residue polypeptide: Isoaspartyl peptidase/L-asparaginase (306 aa).

The Nucleophile role is filled by Thr174. Substrate contacts are provided by residues 202 to 205 and 224 to 227; these read RIGD and TGKG.

This sequence belongs to the Ntn-hydrolase family. In terms of assembly, heterotetramer of two alpha and two beta chains arranged as a dimer of alpha/beta heterodimers. Cleaved into an alpha and beta chain by autocatalysis; this activates the enzyme. The N-terminal residue of the beta subunit is responsible for the nucleophile hydrolase activity. Developing seeds.

The enzyme catalyses Cleavage of a beta-linked Asp residue from the N-terminus of a polypeptide.. Functionally, degrades proteins damaged by L-isoaspartyl residue formation (also known as beta-Asp residues). Also has L-asparaginase activity, which is used to liberate stored nitrogen during seed development. The protein is Isoaspartyl peptidase/L-asparaginase of Lupinus arboreus (Tree lupine).